We begin with the raw amino-acid sequence, 344 residues long: MLMFDPVPVKQEAMDPVSVSFPSNYIESMKPNKYGVIYSTPLPDKFFQTPEGLTHGIQVEPVDLTVNKRGSPPAAGGSPSSLKFPSHRRASPGLSMPSSSPPIKKYSPPSPGVQPFGVPLSMPPVMAAALSRHGIRSPGILPVIQPVVVQPVPFMYTSHLQQPLMVSLSEEMDNSNSGMPVPVIESYEKPLLQKKIKIEPGIEPQRTDYYPEEMSPPLMNPVSPPQALLQENHPSVIVQPGKRPLPVESPDTQRKRRIHRCDYDGCNKVYTKSSHLKAHRRTHTGEKPYKCTWEGCTWKFARSDELTRHFRKHTGIKPFQCPDCDRSFSRSDHLALHRKRHMLV.

Residues 1–74 (MLMFDPVPVK…TVNKRGSPPA (74 aa)) form a repressor domain region. Lys10 is covalently cross-linked (Glycyl lysine isopeptide (Lys-Gly) (interchain with G-Cter in SUMO)). Residues 60 to 68 (EPVDLTVNK) carry the 9aaTAD; inactive motif. A CTBP-binding motif motif is present at residues 61 to 65 (PVDLT). Residues 66 to 111 (VNKRGSPPAAGGSPSSLKFPSHRRASPGLSMPSSSPPIKKYSPPSP) are disordered. Lys68 is covalently cross-linked (Glycyl lysine isopeptide (Lys-Gly) (interchain with G-Cter in SUMO2)). Low complexity-rich tracts occupy residues 70 to 81 (GSPPAAGGSPSS) and 91 to 107 (SPGL…KKYS). Phosphoserine occurs at positions 71, 91, 100, 107, and 110. A Glycyl lysine isopeptide (Lys-Gly) (interchain with G-Cter in SUMO2) cross-link involves residue Lys195. Lys197 is covalently cross-linked (Glycyl lysine isopeptide (Lys-Gly) (interchain with G-Cter in SUMO); alternate). Lys197 participates in a covalent cross-link: Glycyl lysine isopeptide (Lys-Gly) (interchain with G-Cter in SUMO2); alternate. 3 positions are modified to phosphoserine: Ser215, Ser223, and Ser249. Residues 235–254 (SVIVQPGKRPLPVESPDTQR) form a disordered region. 3 consecutive C2H2-type zinc fingers follow at residues 259–283 (HRCD…RRTH), 289–313 (YKCT…FRKH), and 319–341 (FQCP…RKRH).

Belongs to the krueppel C2H2-type zinc-finger protein family. Monomer. Sumoylated with SUMO1. Sumoylation is enhanced by PIAS1, PIAS2alpha and PIAS2beta, and PIAS4, but not by Pc2. Enhances transcriptional repression, but has no effect on DNA binding. Sumoylation on Lys-197 is the major site. In terms of tissue distribution, in 8.5 day embryos, expressed in midbrain, anterior hindbrain and ventral forebrain. In 9 day embryos, expressed throughout ventral anterior half of embryo including midbrain-hindbrain junction, ventral midbrain, diencephalon and forebrain. At 10.5 days, distribution is more widespread with expression also found in developing limb buds. Widely expressed in the adult.

The protein localises to the nucleus. In terms of biological role, binds to the CACCC box of erythroid cell-expressed genes. May play a role in hematopoiesis. The chain is Krueppel-like factor 3 (Klf3) from Mus musculus (Mouse).